Here is a 318-residue protein sequence, read N- to C-terminus: Vomeronasal type-1 receptor 45 (318 aa).

Topologically, residues 1-32 (MSEILFFSPQPLFSHMMNKNSRLHTHSNIKNT) are extracellular. Residues 33-53 (FFSEIGIGILGNSFLLLFHIL) form a helical membrane-spanning segment. At 54–65 (KFIRGHRLRLTD) the chain is on the cytoplasmic side. A helical membrane pass occupies residues 66 to 86 (LPIGLLSLIHLLMLLLMAFIA). At 87–109 (TDIFISRRGWDDIICKFLVYLYR) the chain is on the extracellular side. Cys-101 and Cys-188 form a disulfide bridge. A helical membrane pass occupies residues 110-130 (VLRGLSLCTTSMLSVLQAIIL). The Cytoplasmic segment spans residues 131–150 (SPRSSCLAKLKHKYPHHISC). A helical transmembrane segment spans residues 151-171 (AIIFLSVLYMLISSHILLSII). Topologically, residues 172–206 (ATPNLTRNDFLYVTQSCSILPLSYVMQSMYSTLLA) are extracellular. Residue Asn-175 is glycosylated (N-linked (GlcNAc...) asparagine). A helical transmembrane segment spans residues 207-227 (LREVFLISLMVLSTLYMVVLL). Residues 228–254 (CRHRKQAQHLQGTSLSPKASAEQRATQ) are Cytoplasmic-facing. Residues 255–275 (TILMLMTFFVLMSIFDSIVSC) traverse the membrane as a helical segment. Over 276–285 (SRTMFLDDPT) the chain is Extracellular. Residues 286–306 (SYSIHIFVMHIYATVSPFVFM) form a helical membrane-spanning segment. Over 307-318 (STEKHIVNILRG) the chain is Cytoplasmic.

It belongs to the G-protein coupled receptor 1 family. Expressed in a subset of sensory neurons located in the apical layer of the vomeronasal organ.

Its subcellular location is the cell membrane. Putative pheromone receptor implicated in the regulation of social and reproductive behavior. The chain is Vomeronasal type-1 receptor 45 (Vmn1r45) from Mus musculus (Mouse).